We begin with the raw amino-acid sequence, 148 residues long: uncharacterized protein (148 aa).

The HTH asnC-type domain maps to Leu-4–Met-65. A DNA-binding region (H-T-H motif) is located at residues Tyr-23–Thr-42.

This is an uncharacterized protein from Pyrococcus abyssi (strain GE5 / Orsay).